The following is a 663-amino-acid chain: UvrABC system protein B (663 aa).

The region spanning 31 to 271 is the Helicase ATP-binding domain; sequence DNIEGGEKAQ…EQSISKIQAE (241 aa). Residue 44–51 coordinates ATP; sequence GATGTGKT. Positions 97–120 match the Beta-hairpin motif; it reads YYDYYQPEAYVPSSDTYIEKDSSV. The Helicase C-terminal domain maps to 435–601; sequence QMDDLLGEIN…TIKKDIRDLI (167 aa). A UVR domain is found at 627 to 662; sequence QEAIKQLQKNMQEAAELLDFELAAQLRDLILELKAM.

This sequence belongs to the UvrB family. As to quaternary structure, forms a heterotetramer with UvrA during the search for lesions. Interacts with UvrC in an incision complex.

The protein resides in the cytoplasm. Its function is as follows. The UvrABC repair system catalyzes the recognition and processing of DNA lesions. A damage recognition complex composed of 2 UvrA and 2 UvrB subunits scans DNA for abnormalities. Upon binding of the UvrA(2)B(2) complex to a putative damaged site, the DNA wraps around one UvrB monomer. DNA wrap is dependent on ATP binding by UvrB and probably causes local melting of the DNA helix, facilitating insertion of UvrB beta-hairpin between the DNA strands. Then UvrB probes one DNA strand for the presence of a lesion. If a lesion is found the UvrA subunits dissociate and the UvrB-DNA preincision complex is formed. This complex is subsequently bound by UvrC and the second UvrB is released. If no lesion is found, the DNA wraps around the other UvrB subunit that will check the other stand for damage. The chain is UvrABC system protein B from Streptococcus equi subsp. zooepidemicus (strain H70).